The primary structure comprises 372 residues: Protein-glutamate methylesterase/protein-glutamine glutaminase (372 aa).

Positions 5–123 (RVLIVDDSAL…SANLTTVSET (119 aa)) constitute a Response regulatory domain. Residue Asp-56 is modified to 4-aspartylphosphate. A compositionally biased stretch (polar residues) spans 140–151 (GTRSTDTTNSFS). Positions 140–177 (GTRSTDTTNSFSEPFKSTIPKPMTAAEPQKEEKPTPQR) are disordered. A compositionally biased stretch (basic and acidic residues) spans 167–177 (PQKEEKPTPQR). Positions 178-364 (EHGNIQIIAI…VSLDNMAAAI (187 aa)) constitute a CheB-type methylesterase domain. Catalysis depends on residues Ser-190, His-217, and Asp-313.

It belongs to the CheB family. Phosphorylated by CheA. Phosphorylation of the N-terminal regulatory domain activates the methylesterase activity.

The protein resides in the cytoplasm. It catalyses the reaction [protein]-L-glutamate 5-O-methyl ester + H2O = L-glutamyl-[protein] + methanol + H(+). The enzyme catalyses L-glutaminyl-[protein] + H2O = L-glutamyl-[protein] + NH4(+). In terms of biological role, involved in chemotaxis. Part of a chemotaxis signal transduction system that modulates chemotaxis in response to various stimuli. Catalyzes the demethylation of specific methylglutamate residues introduced into the chemoreceptors (methyl-accepting chemotaxis proteins or MCP) by CheR. Also mediates the irreversible deamidation of specific glutamine residues to glutamic acid. The polypeptide is Protein-glutamate methylesterase/protein-glutamine glutaminase (Treponema denticola (strain ATCC 35405 / DSM 14222 / CIP 103919 / JCM 8153 / KCTC 15104)).